Consider the following 336-residue polypeptide: Cellodextrinase A (336 aa).

Residue Glu141 is the Proton donor of the active site.

It belongs to the glycosyl hydrolase 5 (cellulase A) family.

It is found in the secreted. Crystalline cellulose degradation. The sequence is that of Cellodextrinase A (celA) from Ruminococcus flavefaciens.